Here is a 289-residue protein sequence, read N- to C-terminus: Bidirectional sugar transporter SWEET11 (289 aa).

Topologically, residues 1-9 are extracellular; the sequence is MSLFNTENT. The chain crosses the membrane as a helical span at residues 10 to 30; sequence WAFVFGLLGNLISFAVFLSPV. One can recognise a MtN3/slv 1 domain in the interval 12 to 98; the sequence is FVFGLLGNLI…SMFLAYAPKP (87 aa). The Cytoplasmic segment spans residues 31–43; it reads PTFYRIWKKKTTE. The helical transmembrane segment at 44–64 threads the bilayer; the sequence is GFQSIPYVVALFSATLWLYYA. Residues 65–70 are Extracellular-facing; sequence TQKKDV. The helical transmembrane segment at 71 to 91 threads the bilayer; the sequence is FLLVTINAFGCFIETIYISMF. The Cytoplasmic segment spans residues 92 to 105; it reads LAYAPKPARMLTVK. Residues 106 to 126 form a helical membrane-spanning segment; it reads MLLLMNFGGFCAILLLCQFLV. Over 127–133 the chain is Extracellular; sequence KGATRAK. A helical membrane pass occupies residues 134-154; sequence IIGGICVGFSVCVFAAPLSII. The MtN3/slv 2 domain maps to 134 to 218; the sequence is IIGGICVGFS…ILYVVYKYCK (85 aa). Over 155 to 167 the chain is Cytoplasmic; it reads RTVIKTRSVEYMP. Residues 168–188 form a helical membrane-spanning segment; it reads FSLSLTLTISAVIWLLYGLAL. Over 189-192 the chain is Extracellular; the sequence is KDIY. Residues 193–213 traverse the membrane as a helical segment; it reads VAFPNVLGFALGALQMILYVV. At 214–289 the chain is on the cytoplasmic side; that stretch reads YKYCKTSPHL…GKQSSSAAAT (76 aa). The interval 266–289 is disordered; sequence DRRAEIEDGQTPKHGKQSSSAAAT. The residue at position 276 (Thr-276) is a Phosphothreonine.

Belongs to the SWEET sugar transporter family. As to quaternary structure, forms homooligomers and heterooligomers with SWEET1, SWEET3, SWEET5, SWEET6, SWEET7, SWEET8, SWEET9, SWEET12, SWEET13, SWEET15 and SWEET17. As to expression, expressed in leaves, especially in phloem. Expressed in developing seeds.

The protein localises to the cell membrane. Mediates both low-affinity uptake and efflux of sugar across the plasma membrane. Involved in phloem loading by mediating export from parenchyma cells feeding H(+)-coupled import into the sieve element/companion cell complex, thus contributing to the sucrose migration from sites of synthesis in the mesophyll to the phloem. Contributes to seed filling by triggering sucrose efflux involved in the transfer of sugars from seed coat to embryos. The protein is Bidirectional sugar transporter SWEET11 of Arabidopsis thaliana (Mouse-ear cress).